A 98-amino-acid polypeptide reads, in one-letter code: Mu-type opioid receptor (98 aa).

The Cytoplasmic segment spans residues 1–9 (YTKMKTATN). A helical membrane pass occupies residues 10 to 34 (IYIFNLALADALATSTLPFQSVNYL). Residues 35 to 45 (MGTWPFGTILC) lie on the Extracellular side of the membrane. A helical transmembrane segment spans residues 46–68 (KIVISIDYYNMFTSIFTLCTMSV). The Cytoplasmic portion of the chain corresponds to 69–88 (DRYIAVCHPVKALDFRTPRN). Y71 bears the Phosphotyrosine mark. Residues 89-98 (AKTVNVCNWI) traverse the membrane as a helical segment.

Belongs to the G-protein coupled receptor 1 family. As to quaternary structure, forms homooligomers and heterooligomers with other GPCRs, such as OPRD1, OPRK1, OPRL1, NPFFR2, ADRA2A, SSTR2, CNR1 and CCR5 (probably in dimeric forms). Interacts with heterotrimeric G proteins; interaction with a heterotrimeric complex containing GNAI1, GNB1 and GNG2 stabilizes the active conformation of the receptor and increases its affinity for endomorphin-2, the synthetic opioid peptide DAMGO and for morphinan agonists. Interacts with PPL; the interaction disrupts agonist-mediated G-protein activation. Interacts (via C-terminus) with DNAJB4 (via C-terminus). Interacts with calmodulin; the interaction inhibits the constitutive activity of OPRM1; it abolishes basal and attenuates agonist-stimulated G-protein coupling. Interacts with FLNA, PLD2, RANBP9 and WLS and GPM6A. Interacts with RTP4. Interacts with SYP and GNAS. Interacts with RGS9, RGS17, RGS20, RGS4, PPP1R9B and HINT1. Post-translationally, phosphorylated. Differentially phosphorylated in basal and agonist-induced conditions. Agonist-mediated phosphorylation modulates receptor internalization. Phosphorylated by GRK2 in a agonist-dependent manner. Phosphorylated on tyrosine residues; the phosphorylation is involved in agonist-induced G-protein-independent receptor down-regulation. Phosphorylated. Differentially phosphorylated in basal and agonist-induced conditions. Agonist-mediated phosphorylation modulates receptor internalization. Phosphorylated by GRK2 in a agonist-dependent manner. Phosphorylated on tyrosine residues; the phosphorylation is involved in agonist-induced G-protein-independent receptor down-regulation. In terms of processing, ubiquitinated. A basal ubiquitination seems not to be related to degradation. Ubiquitination is increased upon formation of OPRM1:OPRD1 oligomers leading to proteasomal degradation; the ubiquitination is diminished by RTP4.

It localises to the cell membrane. Its subcellular location is the cell projection. The protein localises to the axon. It is found in the perikaryon. The protein resides in the dendrite. It localises to the endosome. In terms of biological role, receptor for endogenous opioids such as beta-endorphin and endomorphin. Receptor for natural and synthetic opioids including morphine, heroin, DAMGO, fentanyl, etorphine, buprenorphin and methadone. Also activated by enkephalin peptides, such as Met-enkephalin or Met-enkephalin-Arg-Phe, with higher affinity for Met-enkephalin-Arg-Phe. Agonist binding to the receptor induces coupling to an inactive GDP-bound heterotrimeric G-protein complex and subsequent exchange of GDP for GTP in the G-protein alpha subunit leading to dissociation of the G-protein complex with the free GTP-bound G-protein alpha and the G-protein beta-gamma dimer activating downstream cellular effectors. The agonist- and cell type-specific activity is predominantly coupled to pertussis toxin-sensitive G(i) and G(o) G alpha proteins, GNAI1, GNAI2, GNAI3 and GNAO1, and to a lesser extent to pertussis toxin-insensitive G alpha proteins GNAZ and GNA15. They mediate an array of downstream cellular responses, including inhibition of adenylate cyclase activity and both N-type and L-type calcium channels, activation of inward rectifying potassium channels, mitogen-activated protein kinase (MAPK), phospholipase C (PLC), phosphoinositide/protein kinase (PKC), phosphoinositide 3-kinase (PI3K) and regulation of NF-kappa-B. Also couples to adenylate cyclase stimulatory G alpha proteins. The selective temporal coupling to G-proteins and subsequent signaling can be regulated by RGSZ proteins, such as RGS9, RGS17 and RGS4. Phosphorylation by members of the GPRK subfamily of Ser/Thr protein kinases and association with beta-arrestins is involved in short-term receptor desensitization. Beta-arrestins associate with the GPRK-phosphorylated receptor and uncouple it from the G-protein thus terminating signal transduction. The phosphorylated receptor is internalized through endocytosis via clathrin-coated pits which involves beta-arrestins. The activation of the ERK pathway occurs either in a G-protein-dependent or a beta-arrestin-dependent manner and is regulated by agonist-specific receptor phosphorylation. Acts as a class A G-protein coupled receptor (GPCR) which dissociates from beta-arrestin at or near the plasma membrane and undergoes rapid recycling. Receptor down-regulation pathways are varying with the agonist and occur dependent or independent of G-protein coupling. Endogenous ligands induce rapid desensitization, endocytosis and recycling. Heterooligomerization with other GPCRs can modulate agonist binding, signaling and trafficking properties. Involved in neurogenesis. This is Mu-type opioid receptor (OPRM1) from Cavia porcellus (Guinea pig).